A 434-amino-acid chain; its full sequence is Zinc carboxypeptidase (434 aa).

A signal peptide spans 1–33 (MSPKRRRLMAAALGACVALVLPLHAGSAQPSTA). Residues 34-114 (KTPERTVFEV…DFTDPQVGTQ (81 aa)) constitute a propeptide, activation peptide. Residues 122–423 (GYHNFQETVT…SAVELFLSYS (302 aa)) form the Peptidase M14 domain. H183 and E186 together coordinate Zn(2+). A disordered region spans residues 270 to 295 (GSSSSGSSETTAARRRSPPRRSPHPH). Residues 282-293 (ARRRSPPRRSPH) are compositionally biased toward basic residues. A Zn(2+)-binding site is contributed by H315. E388 acts as the Proton donor/acceptor in catalysis.

The protein belongs to the peptidase M14 family. Zn(2+) is required as a cofactor.

The enzyme catalyses Releases a C-terminal residue, which may be hydrophobic or positively charged.. Its function is as follows. Carboxypeptidase that possesses the specificities of both mammalian Cpase A and B. Thus shows broad substrate specificity, being able to cleave Cbz-Gly-Leu, Cbz-Gly-Val, Cbz-Gly-Phe, Cbz-Gly-Lys and Bz-Gly-Arg in vitro. This is Zinc carboxypeptidase from Saccharothrix mutabilis subsp. capreolus (Streptomyces capreolus).